The chain runs to 174 residues: I-Kappa-B like protein C1 (174 aa).

ANK repeat units follow at residues 56–88 (RGRQCIHMVALYDRKNAIMKIEILVNMGADINA) and 93–123 (TGNSLLHIAVKTKNYELAEWLCREPTVNLGA).

The protein belongs to the polydnaviridae I-Kappa-B-like protein family.

Functionally, suppresses the host immune response through NF-kappa-B inactivation. Possesses ankyrin repeat domains required for NF-kappa-B binding but lacks the regulatory regions required for dissociation from NF-kappa-B and degradation. Therefore, prevents host NF-kappa-B release and subsequent activation. This chain is I-Kappa-B like protein C1 (C1), found in Microplitis demolitor bracovirus (isolate Webb) (MdBV).